The primary structure comprises 296 residues: 4-hydroxy-tetrahydrodipicolinate synthase (296 aa).

T49 is a binding site for pyruvate. The Proton donor/acceptor role is filled by Y137. The Schiff-base intermediate with substrate role is filled by K166. I208 lines the pyruvate pocket.

It belongs to the DapA family. In terms of assembly, homotetramer; dimer of dimers.

The protein resides in the cytoplasm. It catalyses the reaction L-aspartate 4-semialdehyde + pyruvate = (2S,4S)-4-hydroxy-2,3,4,5-tetrahydrodipicolinate + H2O + H(+). The protein operates within amino-acid biosynthesis; L-lysine biosynthesis via DAP pathway; (S)-tetrahydrodipicolinate from L-aspartate: step 3/4. In terms of biological role, catalyzes the condensation of (S)-aspartate-beta-semialdehyde [(S)-ASA] and pyruvate to 4-hydroxy-tetrahydrodipicolinate (HTPA). This chain is 4-hydroxy-tetrahydrodipicolinate synthase, found in Chlorobium luteolum (strain DSM 273 / BCRC 81028 / 2530) (Pelodictyon luteolum).